Consider the following 235-residue polypeptide: KNMITGAAQMDGAILVCSAADGPMPQTREHILLSKQVGVPHIVVFLNKQDQVDDEELLELVELEVRELLSSYDFPGDDIPIVAGSALKAVEALQANSSIGKGEDEWVDKIHDLVAQVDEYIPAPERDIDKPFLMAVEDVFSITGRGTVATGRIERGKVKVGEQIEIVGIRDTTQSTVTGVEMFQKTLDEGMAGDNVGVLLRGIQKEDILRGMVLAKPGSITPHTKFEAEVYVLIG.

In terms of domain architecture, tr-type G spans lysine 1 to glutamate 125. Asparagine 47–aspartate 50 contributes to the GTP binding site.

Belongs to the TRAFAC class translation factor GTPase superfamily. Classic translation factor GTPase family. EF-Tu/EF-1A subfamily. Monomer.

It is found in the cytoplasm. The catalysed reaction is GTP + H2O = GDP + phosphate + H(+). Its function is as follows. GTP hydrolase that promotes the GTP-dependent binding of aminoacyl-tRNA to the A-site of ribosomes during protein biosynthesis. This chain is Elongation factor Tu (tufA), found in Leptolyngbya ectocarpi (Phormidium ectocarpi).